We begin with the raw amino-acid sequence, 752 residues long: Peptidyl-prolyl cis-trans isomerase G (752 aa).

The 166-residue stretch at 11–176 (FFDIAINNQP…AEVRILSCGE (166 aa)) folds into the PPIase cyclophilin-type domain. Residues 182 to 193 (KVKKEEKKRHKS) are compositionally biased toward basic residues. The tract at residues 182–752 (KVKKEEKKRH…SPGTDEDKSG (571 aa)) is disordered. A compositionally biased stretch (low complexity) spans 194–214 (SSSSSSSDSDSSSDSQSSSDS). A compositionally biased stretch (basic residues) spans 226–251 (RKRKKKHRKNSRKHKKEKKKRKKSKK). Phosphoserine is present on residues S252, S254, S255, S257, and S288. Over residues 290–308 (PKADDKERKNREREREREC) the composition is skewed to basic and acidic residues. Residue S313 is modified to Phosphoserine. Basic residues predominate over residues 327–345 (FGRKIKGRGPRRYRTPSRS). 2 stretches are compositionally biased toward basic and acidic residues: residues 346 to 366 (RSRD…EMQR) and 377 to 447 (RWIK…DKYN). Phosphoserine is present on S354. T356 bears the Phosphothreonine mark. Phosphoserine is present on S384. A Glycyl lysine isopeptide (Lys-Gly) (interchain with G-Cter in SUMO2) cross-link involves residue K390. 3 positions are modified to phosphoserine: S395, S411, and S413. Positions 448–461 (KNKVKKRGKSKSRS) are enriched in basic residues. Composition is skewed to basic and acidic residues over residues 462–552 (KSKE…DLTK) and 577–598 (RSHD…QEYR). Residues 599 to 625 (RRGRSRSRDRRTPGRSRSKDRRRRRRD) show a composition bias toward basic residues. Basic and acidic residues predominate over residues 626 to 682 (SRSSEREESQSRNKEKYRSQDSKSSHRKENSEGEKRMYSKSRDHSSSNNNREKKADI). S685 and S688 each carry phosphoserine. Over residues 685 to 705 (SPVSKTKQSSQDNEVKSSTLK) the composition is skewed to polar residues. A Glycyl lysine isopeptide (Lys-Gly) (interchain with G-Cter in SUMO2) cross-link involves residue K691. Phosphoserine occurs at positions 694, 742, and 743. Basic and acidic residues predominate over residues 706-752 (NQEDEKTRSPVEKENQKSKGQENDHVHDKNKKCDHESSPGTDEDKSG). A Phosphothreonine modification is found at T746. The residue at position 751 (S751) is a Phosphoserine.

Interacts with CLK1, PNN and with the phosphorylated C-terminal domain of RNA polymerase II.

The protein localises to the nucleus matrix. It is found in the nucleus speckle. It carries out the reaction [protein]-peptidylproline (omega=180) = [protein]-peptidylproline (omega=0). Its activity is regulated as follows. Inhibited by cyclosporin A (CsA). In terms of biological role, PPIase that catalyzes the cis-trans isomerization of proline imidic peptide bonds in oligopeptides and may therefore assist protein folding. May be implicated in the folding, transport, and assembly of proteins. May play an important role in the regulation of pre-mRNA splicing. The sequence is that of Peptidyl-prolyl cis-trans isomerase G (Ppig) from Rattus norvegicus (Rat).